Consider the following 314-residue polypeptide: Solute carrier family 25 member 44 (314 aa).

3 Solcar repeats span residues 18-100 (KKFY…TRKF), 107-210 (SNTV…YAEQ), and 220-302 (PHIV…LKKL). Transmembrane regions (helical) follow at residues 20–42 (FYVF…TLIR), 71–90 (TGLY…GQCY), 113–133 (LVAG…IDVV), 185–201 (GYVA…AVWW), 222–239 (IVFQ…ASIL), and 278–296 (LSAR…VVGY).

Belongs to the mitochondrial carrier (TC 2.A.29) family.

The protein localises to the mitochondrion membrane. The enzyme catalyses L-valine(in) = L-valine(out). It catalyses the reaction L-leucine(in) = L-leucine(out). Its function is as follows. Mitochondrial solute transporter which transports branched-chain amino acid (BCAA; valine, leucine and isoleucine) into mitochondria in brown adipose tissue (BAT). BAT is involved in BCAA catabolism and actively utilizes BCAA in the mitochondria for thermogenesis. In Pongo abelii (Sumatran orangutan), this protein is Solute carrier family 25 member 44.